A 355-amino-acid polypeptide reads, in one-letter code: Protein-glutamate methylesterase/protein-glutamine glutaminase (355 aa).

The 117-residue stretch at 7 to 123 (AAVVVDDSQF…SVGIKQQQDE (117 aa)) folds into the Response regulatory domain. D57 is subject to 4-aspartylphosphate. The segment at 139 to 159 (TEAAAERTTSTATSTTTSRSA) is disordered. The CheB-type methylesterase domain maps to 161-355 (EYVDKPTLVI…DGVLDTIMRE (195 aa)). Active-site residues include S173, H200, and D297.

It belongs to the CheB family. Post-translationally, phosphorylated by CheA. Phosphorylation of the N-terminal regulatory domain activates the methylesterase activity.

The protein localises to the cytoplasm. The enzyme catalyses [protein]-L-glutamate 5-O-methyl ester + H2O = L-glutamyl-[protein] + methanol + H(+). The catalysed reaction is L-glutaminyl-[protein] + H2O = L-glutamyl-[protein] + NH4(+). Functionally, involved in chemotaxis. Part of a chemotaxis signal transduction system that modulates chemotaxis in response to various stimuli. Catalyzes the demethylation of specific methylglutamate residues introduced into the chemoreceptors (methyl-accepting chemotaxis proteins or MCP) by CheR. Also mediates the irreversible deamidation of specific glutamine residues to glutamic acid. This chain is Protein-glutamate methylesterase/protein-glutamine glutaminase, found in Natronomonas pharaonis (strain ATCC 35678 / DSM 2160 / CIP 103997 / JCM 8858 / NBRC 14720 / NCIMB 2260 / Gabara) (Halobacterium pharaonis).